The following is a 669-amino-acid chain: Filensin (669 aa).

Residues 1-33 (MYRRSYVFQARQERYERAQPAGPAAQPGGTAPG) are head. At serine 5 the chain carries Phosphoserine. Positions 33–318 (GLAALQALGE…RIIEIEGSRL (286 aa)) constitute an IF rod domain. Positions 34–68 (LAALQALGERVAVQVQRARALQQRHAGLRRQLDAF) are coil 1A. Alanine 35 is subject to N-acetylalanine. Residues 69–77 (QRLGEQPGP) are linker 1. The segment at 78-177 (EDALARHVEA…RYKKNLLEIQ (100 aa)) is coil 1B. The tract at residues 178 to 194 (TYITVLQQIVQTAPQVS) is linker 12. The tract at residues 195–318 (LVTGMRESGL…RIIEIEGSRL (124 aa)) is coil 2. Residues 319–669 (SSVFIETPIS…GEKSLPDTRA (351 aa)) form a tail region. Serine 339 is subject to Phosphoserine. Disordered regions lie at residues 380-435 (VEET…GGQI), 449-468 (RVSGHKEPEPEPPTDLFTKG), and 505-618 (HHDG…KALS). The segment covering 408–417 (SQPGAGGGHG) has biased composition (gly residues). Glycine 432 carries the N-myristoyl glycine lipid modification. The residue at position 513 (serine 513) is a Phosphoserine. Residues 545 to 570 (NGLRAKEPKDLEEKDDDGKKEAEGSR) are compositionally biased toward basic and acidic residues. Residues 583 to 593 (PSTSHSQTSGS) show a composition bias toward polar residues. The residue at position 585 (threonine 585) is a Phosphothreonine.

Belongs to the intermediate filament family. As to quaternary structure, part of a complex required for lens intermediate filament formation composed of BFSP1, BFSP2 and CRYAA. Identified in a complex that contains VIM, EZR, AHNAK, BFSP1, BFSP2, ANK2, PLEC, PRX and spectrin. Found in a complex composed of PPL (via C-terminal linker domain), BFSP1 and BFSP2 in the retinal lens. Within the complex interacts with BFSP2. Interacts (via C-terminus) with MIP (via C-terminus) in aged lens fiber cells. Post-translationally, proteolytically cleaved during lens cell fiber differentiation with increased fragmentation as fiber cell age increases. Myristoylated at Gly-432 following proteolytic cleavage at Asp-431. In terms of processing, acetylated at Ala-35 following proteolytic cleavage at Leu-34. In terms of tissue distribution, detected in eye lens fiber cells (at protein level). Expressed in retinal lens epithelial cells (at protein level).

The protein resides in the cell membrane. The protein localises to the cytoplasm. Its subcellular location is the cytoskeleton. It localises to the cell cortex. Required for the correct formation of lens intermediate filaments as part of a complex composed of BFSP1, BFSP2 and CRYAA. Involved in altering the calcium regulation of MIP water permeability. The protein is Filensin (Bfsp1) of Mus musculus (Mouse).